The primary structure comprises 220 residues: Small ribosomal subunit protein uS2 (220 aa).

The protein belongs to the universal ribosomal protein uS2 family.

The protein is Small ribosomal subunit protein uS2 of Methanococcus maripaludis (strain DSM 14266 / JCM 13030 / NBRC 101832 / S2 / LL).